Reading from the N-terminus, the 218-residue chain is NAD(P)H-quinone oxidoreductase subunit U, chloroplastic (218 aa).

The transit peptide at 1-53 (MASLSTITQPSLVHIPGESVLHHVPSTCSFPWKPTINTKRIICSPARNSSEVS) directs the protein to the chloroplast. Residues 47 to 72 (RNSSEVSAEAETEGGSSTAVDEAPKE) are disordered. The 65-residue stretch at 95-159 (DHYGRLGIFR…EERRMYDWSL (65 aa)) folds into the J domain. A helical transmembrane segment spans residues 197–217 (ILGYFIGAWLVLGVALSVAFN).

In terms of assembly, part of the chloroplast NDH complex, composed of a mixture of chloroplast and nucleus encoded subunits. Component of the electron donor-binding subcomplex, at least composed of NDHS, NDHT and NDHU.

Its subcellular location is the plastid. It localises to the chloroplast thylakoid membrane. The enzyme catalyses a plastoquinone + NADH + (n+1) H(+)(in) = a plastoquinol + NAD(+) + n H(+)(out). It catalyses the reaction a plastoquinone + NADPH + (n+1) H(+)(in) = a plastoquinol + NADP(+) + n H(+)(out). Functionally, NDH shuttles electrons from NAD(P)H:plastoquinone, via FMN and iron-sulfur (Fe-S) centers, to quinones in the photosynthetic chain and possibly in a chloroplast respiratory chain. The immediate electron acceptor for the enzyme in this species is believed to be plastoquinone. Couples the redox reaction to proton translocation, and thus conserves the redox energy in a proton gradient. This Arabidopsis thaliana (Mouse-ear cress) protein is NAD(P)H-quinone oxidoreductase subunit U, chloroplastic.